The sequence spans 123 residues: Small ribosomal subunit protein uS13 (123 aa).

The interval 97–123 (PVRGQRTRSNARTRKGPRPSRIKKKGK) is disordered. A compositionally biased stretch (basic residues) spans 101–123 (QRTRSNARTRKGPRPSRIKKKGK).

The protein belongs to the universal ribosomal protein uS13 family. In terms of assembly, part of the 30S ribosomal subunit. Forms a loose heterodimer with protein S19. Forms two bridges to the 50S subunit in the 70S ribosome.

Located at the top of the head of the 30S subunit, it contacts several helices of the 16S rRNA. In the 70S ribosome it contacts the 23S rRNA (bridge B1a) and protein L5 of the 50S subunit (bridge B1b), connecting the 2 subunits; these bridges are implicated in subunit movement. Contacts the tRNAs in the A and P-sites. The polypeptide is Small ribosomal subunit protein uS13 (Fervidobacterium nodosum (strain ATCC 35602 / DSM 5306 / Rt17-B1)).